The primary structure comprises 364 residues: Protein LATERAL BRANCHING OXIDOREDUCTASE 1 (364 aa).

Positions 203–312 (RFEEMFGEAV…RLTIVTFYAP (110 aa)) constitute a Fe2OG dioxygenase domain. H235, D237, and H293 together coordinate Fe cation. R303 serves as a coordination point for 2-oxoglutarate.

Belongs to the iron/ascorbate-dependent oxidoreductase family. In terms of assembly, monomer. Requires Fe(2+) as cofactor. L-ascorbate serves as cofactor. Expressed in the vasculature throughout the plant and in the buds and root tips.

It localises to the cytoplasm. It carries out the reaction (11R)-methyl carlactonoate + 2-oxoglutarate + O2 = (11R)-hydroxymethyl carlactonoate + succinate + CO2. Functionally, oxoglutarate-dependent dioxygenase involved in the biosynthesis of strigolactone natural products, bioactive compounds promoting plant fitness and soil microbe interactions, but preventing shoot branching. Catalyzes the hydroxylation of (11R)-methyl carlactonoate (MeCLA) to produce (11R)-hydroxymethyl carlactonoate (1'-HO-MeCLA) in final stages of strigolactone biosynthesis, downstream of MAX1 and CLAMT. The polypeptide is Protein LATERAL BRANCHING OXIDOREDUCTASE 1 (Arabidopsis thaliana (Mouse-ear cress)).